Reading from the N-terminus, the 73-residue chain is Kappa-scoloptoxin(03)-Ssm1c (73 aa).

Residues 1–23 (MKSWMAILLVMALIIFTLDNCYS) form the signal peptide. 3 cysteine pairs are disulfide-bonded: Cys32–Cys58, Cys41–Cys57, and Cys44–Cys67.

The protein belongs to the scoloptoxin family. In terms of tissue distribution, expressed by the venom gland.

Its subcellular location is the secreted. In terms of biological role, inhibits voltage-gated potassium channels. In Scolopendra mutilans (Chinese red-headed centipede), this protein is Kappa-scoloptoxin(03)-Ssm1c.